A 311-amino-acid chain; its full sequence is tRNA pseudouridine synthase B (311 aa).

Asp-52 functions as the Nucleophile in the catalytic mechanism.

It belongs to the pseudouridine synthase TruB family. Type 1 subfamily.

It carries out the reaction uridine(55) in tRNA = pseudouridine(55) in tRNA. Functionally, responsible for synthesis of pseudouridine from uracil-55 in the psi GC loop of transfer RNAs. This is tRNA pseudouridine synthase B from Burkholderia mallei (strain ATCC 23344).